The sequence spans 35 residues: Thrombin-like enzyme cerastobin (35 aa).

Residues 1-35 (VIGGAKCNINEHRSIVLLYSSRLFGHTLINKEWVL) enclose the Peptidase S1 domain.

Belongs to the peptidase S1 family. Snake venom subfamily. In terms of assembly, monomer. Expressed by the venom gland.

Its subcellular location is the secreted. Inhibited by diisopropylfluorophosphate (DFP). Its function is as follows. Thrombin-like snake venom serine protease, that cleaves both alpha-chain (FGA) and beta-chain (FGB) of fibrinogen. Partially degrades factor X (F10), and release bradykinin from kininogen (KNG). Potently induces platelet aggregation. Shows a proteolytic activity towards protein constituents of the platelets cytoskeleton. Hydrolyzes actin, actin-binding protein, and P235. Shows a preferential cleavage at Arg-|-Xaa bonds. This chain is Thrombin-like enzyme cerastobin, found in Cerastes vipera (Sahara sand viper).